We begin with the raw amino-acid sequence, 310 residues long: N-acetyl-gamma-glutamyl-phosphate reductase (310 aa).

Cysteine 117 is an active-site residue.

The protein belongs to the NAGSA dehydrogenase family. Type 2 subfamily.

The protein localises to the cytoplasm. The enzyme catalyses N-acetyl-L-glutamate 5-semialdehyde + phosphate + NADP(+) = N-acetyl-L-glutamyl 5-phosphate + NADPH + H(+). It participates in amino-acid biosynthesis; L-arginine biosynthesis; N(2)-acetyl-L-ornithine from L-glutamate: step 3/4. Catalyzes the NADPH-dependent reduction of N-acetyl-5-glutamyl phosphate to yield N-acetyl-L-glutamate 5-semialdehyde. In Sinorhizobium medicae (strain WSM419) (Ensifer medicae), this protein is N-acetyl-gamma-glutamyl-phosphate reductase.